The sequence spans 68 residues: Adipokinetic prohormone type 1 (68 aa).

Residues 1 to 20 form the signal peptide; the sequence is MNKIYFVIVFVACFCLFAEA. Residue Gln-21 is modified to Pyrrolidone carboxylic acid. Glycine amide is present on Gly-30. Positions 34 to 68 are excised as a propeptide; that stretch reads SGVAPMSCKNEEAVATIFKLIQNEAERFIICQQKS.

In terms of tissue distribution, expressed in antennal lobe (AL), corpora cardiaca (CC), corpora allata (CA) and gnathal ganglion (GNG) (at protein level). Expression in CC and CA detected in all animals, expression in GNG in some animals and in AL in few animals (at protein level).

It localises to the secreted. Functionally, this hormone, released from cells in the corpora cardiaca, causes release of diglycerides from the fat body and stimulation of muscles to use these diglycerides as an energy source during energy-demanding processes. The sequence is that of Adipokinetic prohormone type 1 from Agrotis ipsilon (Black cutworm moth).